A 147-amino-acid polypeptide reads, in one-letter code: Cyanate hydratase (147 aa).

Catalysis depends on residues Arg-88, Glu-91, and Ser-114.

Belongs to the cyanase family.

It carries out the reaction cyanate + hydrogencarbonate + 3 H(+) = NH4(+) + 2 CO2. Functionally, catalyzes the reaction of cyanate with bicarbonate to produce ammonia and carbon dioxide. The polypeptide is Cyanate hydratase (Polaromonas sp. (strain JS666 / ATCC BAA-500)).